The primary structure comprises 122 residues: Small ribosomal subunit protein uS13 (122 aa).

Residues 96–122 (PVRGQRTRTNARTRKGPKKTVGVRRAK) form a disordered region.

This sequence belongs to the universal ribosomal protein uS13 family. In terms of assembly, part of the 30S ribosomal subunit. Forms a loose heterodimer with protein S19. Forms two bridges to the 50S subunit in the 70S ribosome.

Functionally, located at the top of the head of the 30S subunit, it contacts several helices of the 16S rRNA. In the 70S ribosome it contacts the 23S rRNA (bridge B1a) and protein L5 of the 50S subunit (bridge B1b), connecting the 2 subunits; these bridges are implicated in subunit movement. Contacts the tRNAs in the A and P-sites. The chain is Small ribosomal subunit protein uS13 from Halothermothrix orenii (strain H 168 / OCM 544 / DSM 9562).